The sequence spans 140 residues: Fluoride-specific ion channel FluC 2 (140 aa).

The next 4 helical transmembrane spans lie at 7–27, 45–65, 77–97, and 106–126; these read VPPL…LGAL, WATF…MVLV, PFAG…GLEI, and VLEA…GVVL. Positions 85 and 88 each coordinate Na(+).

This sequence belongs to the fluoride channel Fluc/FEX (TC 1.A.43) family.

Its subcellular location is the cell membrane. The catalysed reaction is fluoride(in) = fluoride(out). Its activity is regulated as follows. Na(+) is not transported, but it plays an essential structural role and its presence is essential for fluoride channel function. Functionally, fluoride-specific ion channel. Important for reducing fluoride concentration in the cell, thus reducing its toxicity. The protein is Fluoride-specific ion channel FluC 2 of Nocardia farcinica (strain IFM 10152).